Consider the following 1291-residue polypeptide: DNA-directed RNA polymerase subunit beta' (1291 aa).

Zn(2+)-binding residues include C60, C62, C75, and C78. Mg(2+) is bound by residues D535, D537, and D539. 4 residues coordinate Zn(2+): C874, C951, C958, and C961.

Belongs to the RNA polymerase beta' chain family. As to quaternary structure, the RNAP catalytic core consists of 2 alpha, 1 beta, 1 beta' and 1 omega subunit. When a sigma factor is associated with the core the holoenzyme is formed, which can initiate transcription. Mg(2+) serves as cofactor. Requires Zn(2+) as cofactor.

It catalyses the reaction RNA(n) + a ribonucleoside 5'-triphosphate = RNA(n+1) + diphosphate. In terms of biological role, DNA-dependent RNA polymerase catalyzes the transcription of DNA into RNA using the four ribonucleoside triphosphates as substrates. In Leifsonia xyli subsp. xyli (strain CTCB07), this protein is DNA-directed RNA polymerase subunit beta'.